The sequence spans 491 residues: MSESNVSWEVVIGLETHVQLGTKSKIFTSASTTFGDDPNTHIDPVVCGLPGTLPVLNKKVLEYAVKAAMALNLNIASHSKFDRKQYFYPDLPKNYQISQFDEPIAEDGWIEVEVAEKGKETYVKKIGIERLHMEEDAGKLVHAGSDQLSGSTHSLVDYNRAGVALAEIVSKPDLRTGREAAEYAAEVRRIMRYLGVSDGNMQEGSLRCDVNISVRPTINDPFGTKVEIKNMNSFSAIQKACEYEIKRQIKAYESGEEVKQETRLWDEGKQLTKSMRSKEGSSDYRYFPDPDLGPIEVSNELKEKWRSELPELPAAKRNRYSTELGLSIYDARVLTDESSMATYFEKVVNEGGAAKSSANWITGDLAAYIKSNRLTFDQLHFQPSELAEMLKMIDTGEISGKIAKEILPELLSKGGSPKQLVQERGLGMIGDPKVIEEIIDQLILKHPNEVESFRSGKKKLLGFFVGQLMKETKGKADPKLANQILNKKLQA.

Belongs to the GatB/GatE family. GatB subfamily. In terms of assembly, heterotrimer of A, B and C subunits.

It catalyses the reaction L-glutamyl-tRNA(Gln) + L-glutamine + ATP + H2O = L-glutaminyl-tRNA(Gln) + L-glutamate + ADP + phosphate + H(+). It carries out the reaction L-aspartyl-tRNA(Asn) + L-glutamine + ATP + H2O = L-asparaginyl-tRNA(Asn) + L-glutamate + ADP + phosphate + 2 H(+). Functionally, allows the formation of correctly charged Asn-tRNA(Asn) or Gln-tRNA(Gln) through the transamidation of misacylated Asp-tRNA(Asn) or Glu-tRNA(Gln) in organisms which lack either or both of asparaginyl-tRNA or glutaminyl-tRNA synthetases. The reaction takes place in the presence of glutamine and ATP through an activated phospho-Asp-tRNA(Asn) or phospho-Glu-tRNA(Gln). This is Aspartyl/glutamyl-tRNA(Asn/Gln) amidotransferase subunit B from Prochlorococcus marinus (strain NATL2A).